A 245-amino-acid chain; its full sequence is tRNA pseudouridine synthase A (245 aa).

Asp52 functions as the Nucleophile in the catalytic mechanism. Residue Tyr111 coordinates substrate.

Belongs to the tRNA pseudouridine synthase TruA family. Homodimer.

It catalyses the reaction uridine(38/39/40) in tRNA = pseudouridine(38/39/40) in tRNA. Functionally, formation of pseudouridine at positions 38, 39 and 40 in the anticodon stem and loop of transfer RNAs. This chain is tRNA pseudouridine synthase A, found in Bradyrhizobium sp. (strain BTAi1 / ATCC BAA-1182).